A 556-amino-acid chain; its full sequence is Arginine--tRNA ligase (556 aa).

The short motif at 133–143 (ANPTGPIHIGH) is the 'HIGH' region element.

Belongs to the class-I aminoacyl-tRNA synthetase family. Monomer.

It is found in the cytoplasm. It carries out the reaction tRNA(Arg) + L-arginine + ATP = L-arginyl-tRNA(Arg) + AMP + diphosphate. This Dehalococcoides mccartyi (strain CBDB1) protein is Arginine--tRNA ligase.